Consider the following 182-residue polypeptide: Putative manganese efflux pump MntP (182 aa).

6 helical membrane-spanning segments follow: residues L6–G26, I37–V57, H71–L91, I101–L121, V131–I151, and Y162–I182.

This sequence belongs to the MntP (TC 9.B.29) family.

It localises to the cell membrane. Probably functions as a manganese efflux pump. The sequence is that of Putative manganese efflux pump MntP from Bacillus cereus (strain Q1).